Here is a 692-residue protein sequence, read N- to C-terminus: ABC1 family protein C21C3.03, mitochondrial (692 aa).

A mitochondrion-targeting transit peptide spans 1 to 91 (MISFSHWNSH…RKFTTRQKSE (91 aa)). 2 helical membrane-spanning segments follow: residues 96 to 116 (WRIL…LWIL) and 161 to 181 (LFII…ISFL).

This sequence belongs to the protein kinase superfamily. ADCK protein kinase family.

The protein localises to the mitochondrion membrane. The polypeptide is ABC1 family protein C21C3.03, mitochondrial (Schizosaccharomyces pombe (strain 972 / ATCC 24843) (Fission yeast)).